We begin with the raw amino-acid sequence, 615 residues long: Elongation factor 4 (615 aa).

One can recognise a tr-type G domain in the interval 17-198 (ASIRNFCIIA…RVSRTIPAPV (182 aa)). GTP contacts are provided by residues 29-34 (DHGKST) and 145-148 (NKID).

This sequence belongs to the TRAFAC class translation factor GTPase superfamily. Classic translation factor GTPase family. LepA subfamily.

The protein localises to the cell membrane. It catalyses the reaction GTP + H2O = GDP + phosphate + H(+). Its function is as follows. Required for accurate and efficient protein synthesis under certain stress conditions. May act as a fidelity factor of the translation reaction, by catalyzing a one-codon backward translocation of tRNAs on improperly translocated ribosomes. Back-translocation proceeds from a post-translocation (POST) complex to a pre-translocation (PRE) complex, thus giving elongation factor G a second chance to translocate the tRNAs correctly. Binds to ribosomes in a GTP-dependent manner. This Clavibacter sepedonicus (Clavibacter michiganensis subsp. sepedonicus) protein is Elongation factor 4.